The chain runs to 303 residues: Golgi to ER traffic protein 2 (303 aa).

At 1-168 the chain is on the cytoplasmic side; the sequence is MSEQPLSQDE…NAYNIYQQRL (168 aa). Positions 19 to 86 are disordered; it reads RQAKMARGKA…DPEDDPDLMD (68 aa). The span at 31 to 48 shows a compositional bias: polar residues; it reads RLNNILSQGSSVKGTTDP. Residues 169–189 traverse the membrane as a helical segment; that stretch reads WKFRFSIIRFAAVLTNFFYHY. At 190 to 216 the chain is on the lumenal side; sequence LTIQDYSFTSSPHFYVRALAPHPAVNS. The helical transmembrane segment at 217–236 threads the bilayer; the sequence is FITWFSTCEVAILASFYLIT. Topologically, residues 237-280 are cytoplasmic; that stretch reads SKNNIYANASDGNLLLKGISMGAMVLPQLRAYQPLVIRLAHYWE. Residues 281-301 form a helical membrane-spanning segment; the sequence is VFSMLLGDIFLVVVLFGLVSI. The Lumenal segment spans residues 302–303; sequence YN.

Belongs to the GET2 family. Component of the Golgi to ER traffic (GET) complex, which is composed of GET1, GET2 and GET3. Within the complex, GET1 and GET2 form a heterotetramer which is stabilized by phosphatidylinositol binding and which binds to the GET3 homodimer.

Its subcellular location is the endoplasmic reticulum membrane. It localises to the golgi apparatus membrane. Required for the post-translational delivery of tail-anchored (TA) proteins to the endoplasmic reticulum. Together with GET1, acts as a membrane receptor for soluble GET3, which recognizes and selectively binds the transmembrane domain of TA proteins in the cytosol. The GET complex cooperates with the HDEL receptor ERD2 to mediate the ATP-dependent retrieval of resident ER proteins that contain a C-terminal H-D-E-L retention signal from the Golgi to the ER. This is Golgi to ER traffic protein 2 from Debaryomyces hansenii (strain ATCC 36239 / CBS 767 / BCRC 21394 / JCM 1990 / NBRC 0083 / IGC 2968) (Yeast).